A 177-amino-acid chain; its full sequence is ATP synthase subunit b (177 aa).

The helical transmembrane segment at 19 to 39 (LFPNLPNFIAHVIATIVLVVI) threads the bilayer.

Belongs to the ATPase B chain family. As to quaternary structure, F-type ATPases have 2 components, F(1) - the catalytic core - and F(0) - the membrane proton channel. F(1) has five subunits: alpha(3), beta(3), gamma(1), delta(1), epsilon(1). F(0) has three main subunits: a(1), b(2) and c(10-14). The alpha and beta chains form an alternating ring which encloses part of the gamma chain. F(1) is attached to F(0) by a central stalk formed by the gamma and epsilon chains, while a peripheral stalk is formed by the delta and b chains.

The protein resides in the cell membrane. Its function is as follows. F(1)F(0) ATP synthase produces ATP from ADP in the presence of a proton or sodium gradient. F-type ATPases consist of two structural domains, F(1) containing the extramembraneous catalytic core and F(0) containing the membrane proton channel, linked together by a central stalk and a peripheral stalk. During catalysis, ATP synthesis in the catalytic domain of F(1) is coupled via a rotary mechanism of the central stalk subunits to proton translocation. Functionally, component of the F(0) channel, it forms part of the peripheral stalk, linking F(1) to F(0). This chain is ATP synthase subunit b, found in Mesoplasma florum (strain ATCC 33453 / NBRC 100688 / NCTC 11704 / L1) (Acholeplasma florum).